Here is a 327-residue protein sequence, read N- to C-terminus: MAKAPMRVAVTGAAGQIGYSLLFRIANGDMLGKDQPVILQLLDLPQAQQAVKGVVMELEDCAFPLLAGVVITDDPKVAFKDADVALLVGARPRSKGMERKDLLEANAQIFTVQGKALDEVASRNVKVLVVGNPANTNAYIAMKSAPNLPRENFTAMLRLDHNRALSQIAAKTGKPVSSIEKLFVWGNHSPTMYADYRYATVDGKSVKDLINDPVWNNDVFLPTVGKRGAAIIEARGLSSAASAANAAIDHVRDWVLGTNGKVVTMGIPSNGEYGIPADTMFGYPVTTANGKYEIVKGLEIDAYSQEKINITLNELEEEKAGVQHLLG.

12 to 18 (GAAGQIG) contacts NAD(+). 2 residues coordinate substrate: Arg-93 and Arg-99. Residues Asn-106, Gln-113, and 130–132 (VGN) contribute to the NAD(+) site. Positions 132 and 163 each coordinate substrate. The active-site Proton acceptor is His-188.

Belongs to the LDH/MDH superfamily. MDH type 2 family.

The catalysed reaction is (S)-malate + NAD(+) = oxaloacetate + NADH + H(+). Functionally, catalyzes the reversible oxidation of malate to oxaloacetate. The sequence is that of Malate dehydrogenase from Cupriavidus necator (strain ATCC 17699 / DSM 428 / KCTC 22496 / NCIMB 10442 / H16 / Stanier 337) (Ralstonia eutropha).